The sequence spans 1189 residues: MESTPSFLKGTPTWEKTAPENGIVRQEPGSPPRDGLHHGPLCLGEPAPFWRGVLSTPDSWLPPGFPQGPKDMLPLVEGEGPQNGERKVNWLGSKEGLRWKEAMLTHPLAFCGPACPPRCGPLMPEHSGGHLKSDPVAFRPWHCPFLLETKILERAPFWVPTCLPPYLVSGLPPEHPCDWPLTPHPWVYSGGQPKVPSAFSLGSKGFYYKDPSIPRLAKEPLAAAEPGLFGLNSGGHLQRAGEAERPSLHQRDGEMGAGRQQNPCPLFLGQPDTVPWTSWPACPPGLVHTLGNVWAGPGDGNLGYQLGPPATPRCPSPEPPVTQRGCCSSYPPTKGGGLGPCGKCQEGLEGGASGASEPSEEVNKASGPRACPPSHHTKLKKTWLTRHSEQFECPRGCPEVEERPVARLRALKRAGSPEVQGAMGSPAPKRPPDPFPGTAEQGAGGWQEVRDTSIGNKDVDSGQHDEQKGPQDGQASLQDPGLQDIPCLALPAKLAQCQSCAQAAGEGGGHACHSQQVRRSPLGGELQQEEDTATNSSSEEGPGSGPDSRLSTGLAKHLLSGLGDRLCRLLRREREALAWAQREGQGPAVTEDSPGIPRCCSRCHHGLFNTHWRCPRCSHRLCVACGRVAGTGRAREKAGFQEQSAEECTQEAGHAACSLMLTQFVSSQALAELSTAMHQVWVKFDIRGHCPCQADARVWAPGDAGQQKESTQKTPPTPQPSCNGDTHRTKSIKEETPDSAETPAEDRAGRGPLPCPSLCELLASTAVKLCLGHERIHMAFAPVTPALPSDDRITNILDSIIAQVVERKIQEKALGPGLRAGPGLRKGLGLPLSPVRPRLPPPGALLWLQEPQPCPRRGFHLFQEHWRQGQPVLVSGIQRTLQGNLWGTEALGALGGQVQALSPLGPPQPSSLGSTTFWEGFSWPELRPKSDEGSVLLLHRALGDEDTSRVENLAASLPLPEYCALHGKLNLASYLPPGLALRPLEPQLWAAYGVSPHRGHLGTKNLCVEVADLVSILVHADTPLPAWHRAQKDFLSGLDGEGLWSPGSQVSTVWHVFRAQDAQRIRRFLQMVCPAGAGALEPGAPGSCYLDAGLRRRLREEWGVSCWTLLQAPGEAVLVPAGAPHQVQGLVSTVSVTQHFLSPETSALSAQLCHQGPSLPPDCHLLYAQMDWAVFQAVKVAVGTLQEAK.

5 disordered regions span residues 1-40, 236-257, 349-377, 414-480, and 505-552; these read MEST…HHGP, HLQR…EMGA, EGGA…SHHT, AGSP…LQDP, and GEGG…RLST. Residues 239 to 254 are compositionally biased toward basic and acidic residues; sequence RAGEAERPSLHQRDGE. The span at 457-469 shows a compositional bias: basic and acidic residues; that stretch reads KDVDSGQHDEQKG. Positions 566-570 match the LXXLL motif 1 motif; that stretch reads LCRLL. The segment at 600 to 625 adopts a C6-type zinc-finger fold; that stretch reads CSRCHHGLFNTHWRCPRCSHRLCVAC. The interval 702–750 is disordered; that stretch reads GDAGQQKESTQKTPPTPQPSCNGDTHRTKSIKEETPDSAETPAEDRAGR. The span at 725–736 shows a compositional bias: basic and acidic residues; the sequence is DTHRTKSIKEET. Residues 758-762 carry the LXXLL motif 2 motif; it reads LCELL. Residues 946 to 1157 enclose the JmjC domain; that stretch reads DTSRVENLAA…LSAQLCHQGP (212 aa). Fe cation-binding residues include C1007, E1009, and H1125.

The cofactor is Fe(2+). As to expression, strongest expression of isoforms 1 and 2 is seen in the small intestine, weaker expression in brain and colon, and trace expression is found in liver, pancreas, spleen, thymus, stomach, salivary gland, appendix and trachea. Isoform 1 is always the most abundant. Isoform 1 is exclusively expressed at low levels in kidney and testis. Isoform 2 is exclusively expressed at high levels in the skin.

It is found in the nucleus. The catalysed reaction is N(6),N(6)-dimethyl-L-lysyl(9)-[histone H3] + 2 2-oxoglutarate + 2 O2 = L-lysyl(9)-[histone H3] + 2 formaldehyde + 2 succinate + 2 CO2. Histone demethylase that specifically demethylates both mono- and dimethylated 'Lys-9' of histone H3. May act as a transcription regulator controlling hair biology (via targeting of collagens), neural activity, and cell cycle. This is Lysine-specific demethylase hairless (HR) from Homo sapiens (Human).